The sequence spans 437 residues: MNALKGRDILALGFMTFALFVGAGNIIFPPIVGLQSGPHVWLAALGFLITAVGLPVITVIALAKVGGSVDALSHPIGRYAGGLLAAVCYLAVGPLFAIPRTATVSFEVGVVPLLGESGTALFVYSLAYFLLALAISLYPGRLLDTVGRFLAPLKILALAILGVAAFLWPAGPIGTAQPEYTQAAFSQGFVNGYLTMDTLAALVFGIVIVNAIRSRGVQSPRLITRYAIVAGLIAGVGLVLVYVSLFRLGAGSHAIAADASNGAAVLHAYVQHTFGSLGSSFLAGLIALACLVTAVGLTCACAEYFCQRLPLSYRSLVIILAGFSFIVSNLGLTKLIQVSIPVLTAIYPPCIVLVALSFCIGLWHSATRILAPVMLVSLAFGVLDALKAAGLGQDFPQWLLHLPLAEQGLAWLIPSVATLAACSLVDRLLGKPAQVAA.

12 helical membrane-spanning segments follow: residues 9–29, 40–60, 79–99, 120–140, 155–175, 189–209, 226–246, 277–297, 316–336, 342–362, 369–389, and 399–419; these read ILAL…IIFP, VWLA…ITVI, YAGG…FAIP, ALFV…LYPG, ILAL…PIGT, FVNG…IVIV, YAIV…VSLF, LGSS…AVGL, LVII…TKLI, VLTA…CIGL, ILAP…LKAA, and LLHL…VATL.

This sequence belongs to the branched chain amino acid transporter family.

It localises to the cell inner membrane. Component of the LIV-III transport system for branched-chain amino acids. BraZ is specific for isoleucine and valine. The LIV-III transport system may be H(+)-coupled. The protein is Branched-chain amino acid transport system 3 carrier protein (braZ) of Pseudomonas aeruginosa (strain ATCC 15692 / DSM 22644 / CIP 104116 / JCM 14847 / LMG 12228 / 1C / PRS 101 / PAO1).